The primary structure comprises 386 residues: Acetylornithine aminotransferase (386 aa).

Pyridoxal 5'-phosphate-binding positions include 94–95 (GT) and Phe121. Arg124 is a binding site for N(2)-acetyl-L-ornithine. 206 to 209 (DEVQ) lines the pyridoxal 5'-phosphate pocket. Residue Lys235 is modified to N6-(pyridoxal phosphate)lysine. Ser263 is a binding site for N(2)-acetyl-L-ornithine. Thr264 contributes to the pyridoxal 5'-phosphate binding site.

This sequence belongs to the class-III pyridoxal-phosphate-dependent aminotransferase family. ArgD subfamily. As to quaternary structure, homodimer. Pyridoxal 5'-phosphate serves as cofactor.

It localises to the cytoplasm. The catalysed reaction is N(2)-acetyl-L-ornithine + 2-oxoglutarate = N-acetyl-L-glutamate 5-semialdehyde + L-glutamate. Its pathway is amino-acid biosynthesis; L-arginine biosynthesis; N(2)-acetyl-L-ornithine from L-glutamate: step 4/4. This Listeria monocytogenes serovar 1/2a (strain ATCC BAA-679 / EGD-e) protein is Acetylornithine aminotransferase.